A 547-amino-acid chain; its full sequence is Glucose-6-phosphate isomerase (547 aa).

Residue glutamate 351 is the Proton donor of the active site. Active-site residues include histidine 382 and lysine 510.

This sequence belongs to the GPI family.

It is found in the cytoplasm. It carries out the reaction alpha-D-glucose 6-phosphate = beta-D-fructose 6-phosphate. It participates in carbohydrate biosynthesis; gluconeogenesis. The protein operates within carbohydrate degradation; glycolysis; D-glyceraldehyde 3-phosphate and glycerone phosphate from D-glucose: step 2/4. Catalyzes the reversible isomerization of glucose-6-phosphate to fructose-6-phosphate. The protein is Glucose-6-phosphate isomerase of Beijerinckia indica subsp. indica (strain ATCC 9039 / DSM 1715 / NCIMB 8712).